A 300-amino-acid polypeptide reads, in one-letter code: Acetylglutamate kinase (300 aa).

Substrate is bound by residues 73-74 (GG), Arg95, and Asn197.

This sequence belongs to the acetylglutamate kinase family. ArgB subfamily.

It is found in the cytoplasm. It catalyses the reaction N-acetyl-L-glutamate + ATP = N-acetyl-L-glutamyl 5-phosphate + ADP. It functions in the pathway amino-acid biosynthesis; L-arginine biosynthesis; N(2)-acetyl-L-ornithine from L-glutamate: step 2/4. Its function is as follows. Catalyzes the ATP-dependent phosphorylation of N-acetyl-L-glutamate. This is Acetylglutamate kinase from Bordetella pertussis (strain Tohama I / ATCC BAA-589 / NCTC 13251).